The primary structure comprises 452 residues: Glutamyl-tRNA(Gln) amidotransferase subunit A (452 aa).

Residues lysine 56 and serine 131 each act as charge relay system in the active site. Serine 155 serves as the catalytic Acyl-ester intermediate.

The protein belongs to the amidase family. GatA subfamily. In terms of assembly, heterotrimer of A, B and C subunits.

The catalysed reaction is L-glutamyl-tRNA(Gln) + L-glutamine + ATP + H2O = L-glutaminyl-tRNA(Gln) + L-glutamate + ADP + phosphate + H(+). Allows the formation of correctly charged Gln-tRNA(Gln) through the transamidation of misacylated Glu-tRNA(Gln) in organisms which lack glutaminyl-tRNA synthetase. The reaction takes place in the presence of glutamine and ATP through an activated gamma-phospho-Glu-tRNA(Gln). The protein is Glutamyl-tRNA(Gln) amidotransferase subunit A of Campylobacter concisus (strain 13826).